Reading from the N-terminus, the 148-residue chain is Ribonuclease H (148 aa).

Residues 1–143 (MNQVVIYTDG…ADMLANKGVE (143 aa)) form the RNase H type-1 domain. 4 residues coordinate Mg(2+): Asp9, Glu47, Asp69, and Asp135.

This sequence belongs to the RNase H family. Monomer. The cofactor is Mg(2+).

It localises to the cytoplasm. The enzyme catalyses Endonucleolytic cleavage to 5'-phosphomonoester.. In terms of biological role, endonuclease that specifically degrades the RNA of RNA-DNA hybrids. The polypeptide is Ribonuclease H (Acidovorax sp. (strain JS42)).